We begin with the raw amino-acid sequence, 453 residues long: Nuclear distribution protein nudF-2 (453 aa).

The 33-residue stretch at Q9–E41 folds into the LisH domain. Positions S62 to T88 form a coiled coil. A disordered region spans residues L84–R107. WD repeat units lie at residues S112–K153, H155–R195, G199–T239, G242–K281, G286–L345, G347–K386, and A391–R449.

Belongs to the WD repeat LIS1/nudF family. Self-associates. Interacts with ro-11/nde1 and dynein.

The protein resides in the cytoplasm. The protein localises to the cytoskeleton. It localises to the spindle pole. In terms of biological role, positively regulates the activity of the minus-end directed microtubule motor protein dynein. May enhance dynein-mediated microtubule sliding by targeting dynein to the microtubule plus end. Required for nuclear migration during vegetative growth as well as development. Required for retrograde early endosome (EE) transport from the hyphal tip. Required for localization of dynein to the mitotic spindle poles. Recruits additional proteins to the dynein complex at SPBs. The polypeptide is Nuclear distribution protein nudF-2 (nmp-1) (Neurospora crassa (strain ATCC 24698 / 74-OR23-1A / CBS 708.71 / DSM 1257 / FGSC 987)).